The chain runs to 248 residues: Probable transcriptional regulatory protein MCA1220 (248 aa).

Belongs to the TACO1 family.

It localises to the cytoplasm. The sequence is that of Probable transcriptional regulatory protein MCA1220 from Methylococcus capsulatus (strain ATCC 33009 / NCIMB 11132 / Bath).